Here is a 976-residue protein sequence, read N- to C-terminus: Probable alanine--tRNA ligase, chloroplastic/mitochondrial (976 aa).

The transit peptide at 1–54 (MPRPGFAHATAPALAHARARISPVARRRVVVMRTRVDGAAKSLVTQLRLALGST) directs the protein to the chloroplast and mitochondrion. The interval 71 to 95 (LGTATNDQSTGTRANPNAEGKDNSG) is disordered. The span at 73–85 (TATNDQSTGTRAN) shows a compositional bias: polar residues.

It belongs to the class-II aminoacyl-tRNA synthetase family. Monomer. The cofactor is Zn(2+).

It localises to the plastid. The protein localises to the chloroplast. The protein resides in the mitochondrion. It catalyses the reaction tRNA(Ala) + L-alanine + ATP = L-alanyl-tRNA(Ala) + AMP + diphosphate. Catalyzes the attachment of alanine to tRNA(Ala) in a two-step reaction: alanine is first activated by ATP to form Ala-AMP and then transferred to the acceptor end of tRNA(Ala). Also edits incorrectly charged tRNA(Ala) via its editing domain. In Ostreococcus tauri, this protein is Probable alanine--tRNA ligase, chloroplastic/mitochondrial.